The chain runs to 327 residues: Beta-ketoacyl-[acyl-carrier-protein] synthase III (327 aa).

Catalysis depends on residues Cys-112 and His-253. The interval 254-258 (QANER) is ACP-binding. The active site involves Asn-283.

Belongs to the thiolase-like superfamily. FabH family. As to quaternary structure, homodimer.

The protein localises to the cytoplasm. It carries out the reaction malonyl-[ACP] + acetyl-CoA + H(+) = 3-oxobutanoyl-[ACP] + CO2 + CoA. It participates in lipid metabolism; fatty acid biosynthesis. Functionally, catalyzes the condensation reaction of fatty acid synthesis by the addition to an acyl acceptor of two carbons from malonyl-ACP. Catalyzes the first condensation reaction which initiates fatty acid synthesis and may therefore play a role in governing the total rate of fatty acid production. Possesses both acetoacetyl-ACP synthase and acetyl transacylase activities. Its substrate specificity determines the biosynthesis of branched-chain and/or straight-chain of fatty acids. The chain is Beta-ketoacyl-[acyl-carrier-protein] synthase III from Chlamydia trachomatis serovar A (strain ATCC VR-571B / DSM 19440 / HAR-13).